The following is a 217-amino-acid chain: uncharacterized protein (217 aa).

Helical transmembrane passes span 4 to 23 (IYGIFAFVVLVFFYLLGKET), 44 to 66 (NVVILSVIAFIGVGIFTAYLTWV), 76 to 98 (TVETAGLTATAFLLGGIFGSIII), 111 to 128 (FLYLCFIISAVLFYIHAI), 132 to 154 (MAMVAAVLFVLGFFFISALPLAL), 166 to 188 (AGTANSSLWLFSQVGSVVLIVLF), and 198 to 215 (LLLSAGLLAVSFLLALQL).

It localises to the cell membrane. This is an uncharacterized protein from Archaeoglobus fulgidus (strain ATCC 49558 / DSM 4304 / JCM 9628 / NBRC 100126 / VC-16).